The primary structure comprises 640 residues: Threonine--tRNA ligase (640 aa).

The 59-residue stretch at 1–59 folds into the TGS domain; sequence MKIKVVLPDGSEREYEKGTKPMEIAREVGIKKVIGAVVDEELWDLKRPLERDCRIRFVT. Residues 240–531 form a catalytic region; that stretch reads DHRKLGPQLE…LIEHFAGAFP (292 aa). Zn(2+) is bound by residues cysteine 332, histidine 383, and histidine 508.

The protein belongs to the class-II aminoacyl-tRNA synthetase family. Homodimer. The cofactor is Zn(2+).

The protein resides in the cytoplasm. It carries out the reaction tRNA(Thr) + L-threonine + ATP = L-threonyl-tRNA(Thr) + AMP + diphosphate + H(+). Catalyzes the attachment of threonine to tRNA(Thr) in a two-step reaction: L-threonine is first activated by ATP to form Thr-AMP and then transferred to the acceptor end of tRNA(Thr). Also edits incorrectly charged L-seryl-tRNA(Thr). This chain is Threonine--tRNA ligase, found in Thermotoga neapolitana (strain ATCC 49049 / DSM 4359 / NBRC 107923 / NS-E).